Here is a 144-residue protein sequence, read N- to C-terminus: Large ribosomal subunit protein uL15 (144 aa).

The interval 20–49 is disordered; the sequence is GRGIGSGLGKTGGRGHKGQKSRSGGFHKVG. Over residues 21-31 the composition is skewed to gly residues; the sequence is RGIGSGLGKTG.

The protein belongs to the universal ribosomal protein uL15 family. In terms of assembly, part of the 50S ribosomal subunit.

Functionally, binds to the 23S rRNA. In Neisseria gonorrhoeae (strain ATCC 700825 / FA 1090), this protein is Large ribosomal subunit protein uL15.